Consider the following 318-residue polypeptide: Glutathione synthetase (318 aa).

One can recognise an ATP-grasp domain in the interval K129–E314. H155 to G211 lines the ATP pocket. The Mg(2+) site is built by E285 and N287.

This sequence belongs to the prokaryotic GSH synthase family. Mg(2+) serves as cofactor. Mn(2+) is required as a cofactor.

It carries out the reaction gamma-L-glutamyl-L-cysteine + glycine + ATP = glutathione + ADP + phosphate + H(+). It functions in the pathway sulfur metabolism; glutathione biosynthesis; glutathione from L-cysteine and L-glutamate: step 2/2. The sequence is that of Glutathione synthetase from Bordetella bronchiseptica (strain ATCC BAA-588 / NCTC 13252 / RB50) (Alcaligenes bronchisepticus).